We begin with the raw amino-acid sequence, 395 residues long: Phosphonoacetaldehyde reductase (395 aa).

3 residues coordinate Fe cation: Asp199, His268, and His282.

This sequence belongs to the iron-containing alcohol dehydrogenase family. It depends on Fe cation as a cofactor.

It catalyses the reaction 2-hydroxyethylphosphonate + NAD(+) = phosphonoacetaldehyde + NADH + H(+). It participates in secondary metabolite biosynthesis; bialaphos biosynthesis. Functionally, catalyzes the reduction of phosphonoacetaldehyde to 2-hydroxyethylphosphonate, a step in the biosynthesis of phosphinothricin tripeptide. Phosphinothricin tripeptide (PTT), also known as bialaphos (BA), is a natural-product antibiotic and potent herbicide. Can use both NAD and NADP but the preferred substrate is NAD. This is Phosphonoacetaldehyde reductase (phpC) from Streptomyces viridochromogenes (strain DSM 40736 / JCM 4977 / BCRC 1201 / Tue 494).